A 162-amino-acid polypeptide reads, in one-letter code: Tegument protein BLRF2 (162 aa).

Residues 12 to 43 (VKAVDMSMEDMAARLARLESENKALKQQVLRG) are a coiled coil. Positions 121–162 (GAKGQPSPGEGTRLRESNDPNATRRARSRSRGREAKKVQISD) are disordered. Over residues 151-162 (RGREAKKVQISD) the composition is skewed to basic and acidic residues.

It belongs to the herpesviridae BLRF2 family. As to quaternary structure, homooligomer; homooligomerizes and binds double-stranded DNA (dsDNA) cooperatively. Interacts with host CGAS.

Its subcellular location is the virion tegument. The protein resides in the host cytoplasm. Its function is as follows. Plays a role in the inhibition of host innate immune system by targeting the CGAS enzymatic activity which is the principal cytosolic DNA sensor that detects invading viral DNA. Acts by inhibiting CGAS-DNA phase separation: directly binds double-stranded DNA (dsDNA) in a length dependent but sequence independent manner and is able to form DNA-induced phase separation in infected cells. DNA phase separation of ORF52 mediates disruption of liquid-like droplets in which CGAS is activated, thereby preventing CGAS activity. The chain is Tegument protein BLRF2 from Epstein-Barr virus (strain GD1) (HHV-4).